We begin with the raw amino-acid sequence, 98 residues long: Keratin-associated protein 3-1 (98 aa).

The residue at position 2 (A2) is an N-acetylalanine. A run of 4 repeats spans residues 3 to 7, 8 to 12, 47 to 51, and 55 to 59. The 4 X 5 AA repeats of C-C-X(3) stretch occupies residues 3 to 59; sequence CCAPRCCSVRTGPATTICSSDQFCRCGVCLPSTCPHDISLLQPTFCDNSPVPYHVPD.

Belongs to the KRTAP type 3 family. In terms of assembly, interacts with wool keratins. In terms of tissue distribution, wool.

In the wool cortex, wool keratin intermediate filaments are embedded in an interfilamentous matrix, consisting of hair keratin-associated proteins (KRTAP), which are essential for the formation of a rigid and resistant wool shaft through their extensive disulfide bond cross-linking with abundant cysteine residues of wool keratins. The matrix proteins include the high-sulfur and high-glycine-tyrosine keratins. The sequence is that of Keratin-associated protein 3-1 (KRTAP3-1) from Capra hircus (Goat).